The following is a 174-amino-acid chain: Interleukin-10 (174 aa).

The N-terminal stretch at 1-16 (MPTWMLLFCLLCVTSS) is a signal peptide. Asn17 carries an N-linked (GlcNAc...) asparagine glycan. Disulfide bonds link Cys26–Cys122 and Cys76–Cys128.

It belongs to the IL-10 family. Homodimer. Interacts with IL10RA and IL10RB.

The protein localises to the secreted. Major immune regulatory cytokine that acts on many cells of the immune system where it has profound anti-inflammatory functions, limiting excessive tissue disruption caused by inflammation. Mechanistically, IL10 binds to its heterotetrameric receptor comprising IL10RA and IL10RB leading to JAK1 and STAT2-mediated phosphorylation of STAT3. In turn, STAT3 translocates to the nucleus where it drives expression of anti-inflammatory mediators. Targets antigen-presenting cells (APCs) such as macrophages and monocytes and inhibits their release of pro-inflammatory cytokines including granulocyte-macrophage colony-stimulating factor /GM-CSF, granulocyte colony-stimulating factor/G-CSF, IL-1 alpha, IL-1 beta, IL-6, IL-8 and TNF-alpha. Also interferes with antigen presentation by reducing the expression of MHC-class II and co-stimulatory molecules, thereby inhibiting their ability to induce T cell activation. In addition, controls the inflammatory response of macrophages by reprogramming essential metabolic pathways including mTOR signaling. This is Interleukin-10 (IL10) from Trichosurus vulpecula (Brush-tailed possum).